A 190-amino-acid polypeptide reads, in one-letter code: MQLVFASNNKNKILEIQSMLPESIKILSLSDIGCHEDIPETANTIEGNAILKANYVTQKYGYDCFADDTGLEVEVLNGQPGVFSARYAGEQRNDNDNMDKLLTELDDKTNRNAQFKTVICLNINNKQHLFTGIAKGNIVKNKIGNQGFGYDPIFQPEGYQYTFAQISLEEKANISHRGKATRALIDFFKN.

7–12 (SNNKNK) contacts substrate. Asp68 serves as the catalytic Proton acceptor. Mg(2+) is bound at residue Asp68. Substrate contacts are provided by residues Thr69, 148–151 (FGYD), Lys171, and 176–177 (HR).

It belongs to the HAM1 NTPase family. Homodimer. It depends on Mg(2+) as a cofactor.

The enzyme catalyses XTP + H2O = XMP + diphosphate + H(+). It carries out the reaction dITP + H2O = dIMP + diphosphate + H(+). It catalyses the reaction ITP + H2O = IMP + diphosphate + H(+). Pyrophosphatase that catalyzes the hydrolysis of nucleoside triphosphates to their monophosphate derivatives, with a high preference for the non-canonical purine nucleotides XTP (xanthosine triphosphate), dITP (deoxyinosine triphosphate) and ITP. Seems to function as a house-cleaning enzyme that removes non-canonical purine nucleotides from the nucleotide pool, thus preventing their incorporation into DNA/RNA and avoiding chromosomal lesions. In Flavobacterium psychrophilum (strain ATCC 49511 / DSM 21280 / CIP 103535 / JIP02/86), this protein is dITP/XTP pyrophosphatase.